A 399-amino-acid chain; its full sequence is Elongation factor Tu 1 (399 aa).

Residues 17 to 208 (KPHVNVGTIG…LDDYVEVPPR (192 aa)) form the tr-type G domain. The G1 stretch occupies residues 26-33 (GHVDHGKT). Position 26-33 (26-33 (GHVDHGKT)) interacts with GTP. Threonine 33 is a binding site for Mg(2+). The interval 62-66 (GITIA) is G2. The G3 stretch occupies residues 83-86 (DCPG). Residues 83–87 (DCPGH) and 138–141 (NKAD) each bind GTP. Positions 138–141 (NKAD) are G4. Residues 175-177 (SAL) form a G5 region.

Belongs to the TRAFAC class translation factor GTPase superfamily. Classic translation factor GTPase family. EF-Tu/EF-1A subfamily. Monomer.

The protein resides in the cytoplasm. It carries out the reaction GTP + H2O = GDP + phosphate + H(+). In terms of biological role, GTP hydrolase that promotes the GTP-dependent binding of aminoacyl-tRNA to the A-site of ribosomes during protein biosynthesis. In Wolbachia sp. subsp. Brugia malayi (strain TRS), this protein is Elongation factor Tu 1.